Here is a 660-residue protein sequence, read N- to C-terminus: T-box protein H15 (660 aa).

Positions 1-11 (MLLSNQPANTK) are enriched in polar residues. Disordered stretches follow at residues 1–72 (MLLS…NHNQ), 90–122 (GGNA…DDVD), and 169–266 (QQQQ…PKIV). Over residues 12 to 22 (PQQTPSPSQTQ) the composition is skewed to low complexity. Residues 23 to 33 (NFKSKLQQQIV) are compositionally biased toward polar residues. The span at 35-47 (AAAAAAANIANGS) shows a compositional bias: low complexity. A compositionally biased stretch (basic residues) spans 48–71 (SHHHHHQNHHHHHPLNNHHNHNHN). Low complexity-rich tracts occupy residues 93–108 (APSS…SPAS) and 169–179 (QQQQQQQQQRQ). Positions 180–198 (QTHHHATTGKQQRQHHNHH) are enriched in basic residues. Low complexity predominate over residues 199-233 (SSNTNNSSNSGNSNTNSKSSSQRGRSAAAVGAAAT). Residues 234 to 243 (PSPPPPPPSQ) show a composition bias toward pro residues. Positions 286–472 (LWDKFHELGT…SNPFAKGFRD (187 aa)) form a DNA-binding region, T-box. Residues 598–660 (NRTPPPSMAV…PPASNRAESP (63 aa)) are disordered. Residues 600 to 613 (TPPPSMAVAPPAPA) show a composition bias toward pro residues. Positions 614–624 (TPTSSCGSASP) are enriched in low complexity. Residues 643–660 (QVPQHQASPPASNRAESP) are compositionally biased toward polar residues.

It localises to the nucleus. The sequence is that of T-box protein H15 (H15) from Drosophila melanogaster (Fruit fly).